The chain runs to 63 residues: DNA-directed RNA polymerase 7 kDa subunit (63 aa).

It belongs to the poxviridae DNA-directed RNA polymerase 7 kDa subunit family. The DNA-dependent RNA polymerase used for intermediate and late genes expression consists of eight subunits 147 kDa, 133 kDa, 35 kDa, 30 kDa, 22 kDa, 19 kDa, 18 kDa and 7 kDa totalling more than 500 kDa in mass. The same holoenzyme, with the addition of the transcription-specificity factor RAP94, is used for early gene expression.

It is found in the virion. The enzyme catalyses RNA(n) + a ribonucleoside 5'-triphosphate = RNA(n+1) + diphosphate. Part of the DNA-dependent RNA polymerase which catalyzes the transcription of viral DNA into RNA using the four ribonucleoside triphosphates as substrates. Responsible for the transcription of early, intermediate and late genes. DNA-dependent RNA polymerase associates with the early transcription factor (ETF) thereby allowing the early genes transcription. Late transcription, and probably also intermediate transcription, require newly synthesized RNA polymerase. The polypeptide is DNA-directed RNA polymerase 7 kDa subunit (RPO7) (Molluscum contagiosum virus subtype 1 (MOCV)).